A 645-amino-acid polypeptide reads, in one-letter code: Threonine--tRNA ligase (645 aa).

The TGS domain occupies Met1–Thr61. The catalytic stretch occupies residues Asp242 to Pro541. Zn(2+) is bound by residues Cys337, His388, and His518.

Belongs to the class-II aminoacyl-tRNA synthetase family. Homodimer. The cofactor is Zn(2+).

The protein resides in the cytoplasm. The enzyme catalyses tRNA(Thr) + L-threonine + ATP = L-threonyl-tRNA(Thr) + AMP + diphosphate + H(+). Its function is as follows. Catalyzes the attachment of threonine to tRNA(Thr) in a two-step reaction: L-threonine is first activated by ATP to form Thr-AMP and then transferred to the acceptor end of tRNA(Thr). Also edits incorrectly charged L-seryl-tRNA(Thr). This is Threonine--tRNA ligase from Cytophaga hutchinsonii (strain ATCC 33406 / DSM 1761 / CIP 103989 / NBRC 15051 / NCIMB 9469 / D465).